The chain runs to 152 residues: Protein Smg homolog (152 aa).

The protein belongs to the Smg family.

This is Protein Smg homolog from Nitrosomonas europaea (strain ATCC 19718 / CIP 103999 / KCTC 2705 / NBRC 14298).